The primary structure comprises 941 residues: Protocadherin alpha-12 (941 aa).

An N-terminal signal peptide occupies residues 1 to 29; sequence MVIIGPRGPGSQRLLLSLLLLAAWEVGSG. 6 Cadherin domains span residues 30 to 133, 134 to 242, 243 to 350, 351 to 455, 456 to 565, and 581 to 678; these read QLHY…PPVF, RERE…GPAF, DKPS…VPEV, MVTS…APAF, AQPE…APAL, and VPRS…APKT. At 30–697 the chain is on the extracellular side; that stretch reads QLHYSVYEEA…DPEAALVDIN (668 aa). Residues asparagine 257 and asparagine 265 are each glycosylated (N-linked (GlcNAc...) asparagine). A glycan (N-linked (GlcNAc...) asparagine) is linked at asparagine 548. The helical transmembrane segment at 698-718 threads the bilayer; it reads VYLIIAICAVSSLLVLTLLLY. Residues 719–941 lie on the Cytoplasmic side of the membrane; sequence TALRCSAPPT…GNSTTDNSDQ (223 aa). PXXP repeat units lie at residues 734–737, 790–793, 823–826, 863–866, and 882–885; these read PGKP, PRQP, PGGP, GPGN, and PGSP. The 5 X 4 AA repeats of P-X-X-P stretch occupies residues 734-885; the sequence is PGKPTLVCSS…PDKFIIPGSP (152 aa). A disordered region spans residues 818–941; sequence ILRAGPGGPD…GNSTTDNSDQ (124 aa). Residues 900-914 show a composition bias toward basic and acidic residues; sequence DKSDFITFGKKEETK.

Its subcellular location is the cell membrane. Its function is as follows. Potential calcium-dependent cell-adhesion protein. May be involved in the establishment and maintenance of specific neuronal connections in the brain. The chain is Protocadherin alpha-12 (PCDHA12) from Pan troglodytes (Chimpanzee).